Here is a 56-residue protein sequence, read N- to C-terminus: Ovomucoid (56 aa).

Residues 6–56 enclose the Kazal-like domain; the sequence is VDCSDHPKPACLQEQKPLCGSDNKTYDNKCSFCNAVVDSNGTLTLSHFGKC. Cystine bridges form between C8-C38, C16-C35, and C24-C56. N45 is a glycosylation site (N-linked (GlcNAc...) asparagine).

The protein resides in the secreted. This Pipile pipile (Trinidad piping guan) protein is Ovomucoid.